The sequence spans 67 residues: MATVIVGDSESFEKAMKRFKKVVEREGILSELKRREFYEKPSQKKKRKERAARKRLLKAMKKKRVAL.

This sequence belongs to the bacterial ribosomal protein bS21 family.

The protein is Small ribosomal subunit protein bS21 of Hydrogenobaculum sp. (strain Y04AAS1).